We begin with the raw amino-acid sequence, 117 residues long: Large ribosomal subunit protein bL19 (117 aa).

It belongs to the bacterial ribosomal protein bL19 family.

In terms of biological role, this protein is located at the 30S-50S ribosomal subunit interface and may play a role in the structure and function of the aminoacyl-tRNA binding site. The polypeptide is Large ribosomal subunit protein bL19 (Shewanella baltica (strain OS155 / ATCC BAA-1091)).